We begin with the raw amino-acid sequence, 148 residues long: UPF0260 protein YPK_2117 (148 aa).

It belongs to the UPF0260 family.

This is UPF0260 protein YPK_2117 from Yersinia pseudotuberculosis serotype O:3 (strain YPIII).